The chain runs to 451 residues: MDLKGKKVLLVGLAKTGISTIKHLDKLGASIIVNDIKDENKLRNILDELKSINDIKYILGHHPEDVDDIDMVVVSPGVPLDLPFILKLKNSGKYIIGEVELAFKLSNNPIFIGITGTNGKTTTTSLVGEIFSRAKRDTYVVGNIGNPVIDTIETSSEESVLVTELSSFQLESIDEFRPKVSAILNITEDHLNRHHTMEKYIEAKANIFMNQTVEDFCVLNYDDEIVKSLADKCNAKVIYFSRTKKVNGGVYLENNDIIIDIDDKIKFLNKDDVSLPGGHNLENCMAAIAIAYVCKIDLEVIKDVLMTFKGVEHRQEFVRNLDNVIYVNDSKGTNPDSTIKAIQSYDRPIILIAGGMDKGSNFDELLETAKSYVKSLVLLGETASNIENCAKNKGFNDIHIVKDMEEAVKTSYEISKSGDIVLLSPACASWDMYESFEVRGKDFKDNVNNLK.

116 to 122 (GTNGKTT) lines the ATP pocket.

This sequence belongs to the MurCDEF family.

The protein localises to the cytoplasm. It catalyses the reaction UDP-N-acetyl-alpha-D-muramoyl-L-alanine + D-glutamate + ATP = UDP-N-acetyl-alpha-D-muramoyl-L-alanyl-D-glutamate + ADP + phosphate + H(+). The protein operates within cell wall biogenesis; peptidoglycan biosynthesis. Functionally, cell wall formation. Catalyzes the addition of glutamate to the nucleotide precursor UDP-N-acetylmuramoyl-L-alanine (UMA). The protein is UDP-N-acetylmuramoylalanine--D-glutamate ligase of Clostridioides difficile (strain 630) (Peptoclostridium difficile).